The chain runs to 240 residues: UDP-2,3-diacylglucosamine hydrolase (240 aa).

Mn(2+) is bound by residues aspartate 8, histidine 10, aspartate 41, asparagine 79, and histidine 114. 79–80 (NR) lines the substrate pocket. 5 residues coordinate substrate: aspartate 122, serine 160, asparagine 164, lysine 167, and histidine 195. Positions 195 and 197 each coordinate Mn(2+).

It belongs to the LpxH family. Mn(2+) is required as a cofactor.

Its subcellular location is the cell inner membrane. The enzyme catalyses UDP-2-N,3-O-bis[(3R)-3-hydroxytetradecanoyl]-alpha-D-glucosamine + H2O = 2-N,3-O-bis[(3R)-3-hydroxytetradecanoyl]-alpha-D-glucosaminyl 1-phosphate + UMP + 2 H(+). It participates in glycolipid biosynthesis; lipid IV(A) biosynthesis; lipid IV(A) from (3R)-3-hydroxytetradecanoyl-[acyl-carrier-protein] and UDP-N-acetyl-alpha-D-glucosamine: step 4/6. Functionally, hydrolyzes the pyrophosphate bond of UDP-2,3-diacylglucosamine to yield 2,3-diacylglucosamine 1-phosphate (lipid X) and UMP by catalyzing the attack of water at the alpha-P atom. Involved in the biosynthesis of lipid A, a phosphorylated glycolipid that anchors the lipopolysaccharide to the outer membrane of the cell. The chain is UDP-2,3-diacylglucosamine hydrolase from Enterobacter sp. (strain 638).